A 282-amino-acid chain; its full sequence is Putative 4-diphosphocytidyl-2-C-methyl-D-erythritol kinase (282 aa).

Residue lysine 9 is part of the active site. ATP is bound at residue proline 93 to alanine 103. Residue aspartate 135 is part of the active site.

This sequence belongs to the GHMP kinase family. IspE subfamily.

It catalyses the reaction 4-CDP-2-C-methyl-D-erythritol + ATP = 4-CDP-2-C-methyl-D-erythritol 2-phosphate + ADP + H(+). Functionally, catalyzes the phosphorylation of the position 2 hydroxy group of 4-diphosphocytidyl-2C-methyl-D-erythritol. The polypeptide is Putative 4-diphosphocytidyl-2-C-methyl-D-erythritol kinase (Staphylococcus haemolyticus (strain JCSC1435)).